The following is a 124-amino-acid chain: Small ribosomal subunit protein uS13 (124 aa).

The span at 94 to 117 (NLPVRGQRTRTNARTRKGPRKTVA) shows a compositional bias: basic residues. The disordered stretch occupies residues 94–124 (NLPVRGQRTRTNARTRKGPRKTVANKKIESK).

The protein belongs to the universal ribosomal protein uS13 family. Part of the 30S ribosomal subunit. Forms a loose heterodimer with protein S19. Forms two bridges to the 50S subunit in the 70S ribosome.

Its function is as follows. Located at the top of the head of the 30S subunit, it contacts several helices of the 16S rRNA. In the 70S ribosome it contacts the 23S rRNA (bridge B1a) and protein L5 of the 50S subunit (bridge B1b), connecting the 2 subunits; these bridges are implicated in subunit movement. Contacts the tRNAs in the A and P-sites. This Mycoplasma pneumoniae (strain ATCC 29342 / M129 / Subtype 1) (Mycoplasmoides pneumoniae) protein is Small ribosomal subunit protein uS13.